A 439-amino-acid polypeptide reads, in one-letter code: Probable serine/threonine-protein kinase WNK6 (439 aa).

The segment at 1-30 is disordered; the sequence is MMPPKPAAEDVADEQPEPPDEDPDVAEADP. A compositionally biased stretch (acidic residues) spans 10–27; it reads DVADEQPEPPDEDPDVAE. The Protein kinase domain maps to 35–293; that stretch reads LRYREIIGSG…ASELLKSPFL (259 aa). Residues 116 to 119 and lysine 166 contribute to the ATP site; that span reads TELF. Aspartate 183 functions as the Proton acceptor in the catalytic mechanism.

This sequence belongs to the protein kinase superfamily. Ser/Thr protein kinase family. WNK subfamily.

The enzyme catalyses L-seryl-[protein] + ATP = O-phospho-L-seryl-[protein] + ADP + H(+). It catalyses the reaction L-threonyl-[protein] + ATP = O-phospho-L-threonyl-[protein] + ADP + H(+). The protein is Probable serine/threonine-protein kinase WNK6 (WNK6) of Oryza sativa subsp. japonica (Rice).